The sequence spans 297 residues: L-ribulose 3-epimerase (297 aa).

E147 acts as the Proton donor/acceptor in catalysis. E147 contributes to the Mn(2+) binding site. Substrate-binding positions include E153 and 180–183; that span reads DTFH. Mn(2+) is bound by residues D180 and H206. R212 lines the substrate pocket. The active-site Proton donor/acceptor is E241. A Mn(2+)-binding site is contributed by E241.

Belongs to the hyi family. Homotetramer. The cofactor is Mn(2+).

The enzyme catalyses L-ribulose = L-xylulose. It carries out the reaction keto-D-tagatose = keto-D-sorbose. The catalysed reaction is D-allulose = keto-D-fructose. Its activity is regulated as follows. Strongly inhibited by Co(2+) and Ni(2+), and slightly inhibited by EDTA. Functionally, catalyzes the epimerization of various ketoses at the C(3) position. It is able to interconvert L-ribulose with high efficiency. The enzyme can also accept other ketopentoses such as D-psicose and D-tagatose with lower efficiency. The protein is L-ribulose 3-epimerase of Mesorhizobium japonicum (strain LMG 29417 / CECT 9101 / MAFF 303099) (Mesorhizobium loti (strain MAFF 303099)).